The chain runs to 589 residues: O-fucosyltransferase 11 (589 aa).

The disordered stretch occupies residues 1–37 (MKSKIHHQPNGSNNGVVSSNDNGCRSESPSPPLSPNR). Over residues 10 to 23 (NGSNNGVVSSNDNG) the composition is skewed to low complexity. A helical; Signal-anchor for type II membrane protein transmembrane segment spans residues 68–88 (MIYASGLLMCVGPFSGLVGWV). Asn112, Asn136, and Asn239 each carry an N-linked (GlcNAc...) asparagine glycan. 332–334 (HLR) contributes to the substrate binding site. N-linked (GlcNAc...) asparagine glycans are attached at residues Asn405, Asn406, and Asn564.

It belongs to the glycosyltransferase GT106 family.

The protein localises to the membrane. It functions in the pathway glycan metabolism. This Arabidopsis thaliana (Mouse-ear cress) protein is O-fucosyltransferase 11.